Reading from the N-terminus, the 691-residue chain is Transcription termination factor Rho (691 aa).

The disordered stretch occupies residues 48–303; that stretch reads ISDHQRGGSV…PEVDETELTE (256 aa). The span at 50–64 shows a compositional bias: basic and acidic residues; sequence DHQRGGSVADRDAAE. 2 stretches are compositionally biased toward low complexity: residues 65–92 and 105–119; these read RAAQAPAAPAAETAPAAASSEDAAPAAE and DTSAPAAAQDGQPQA. Basic and acidic residues-rich tracts occupy residues 120-158 and 188-273; these read EAREAQTEQAPRETASDQDRSGGSEARDEGEDRPQSERR and DADR…EGGR. Positions 307–390 constitute a Rho RNA-BD domain; sequence LQPVAGILDV…VKISSVNGQP (84 aa). ATP-binding positions include 433 to 438, 445 to 450, and arginine 476; these read GKGQRG and KAGKTM.

This sequence belongs to the Rho family. As to quaternary structure, homohexamer. The homohexamer assembles into an open ring structure.

Functionally, facilitates transcription termination by a mechanism that involves Rho binding to the nascent RNA, activation of Rho's RNA-dependent ATPase activity, and release of the mRNA from the DNA template. The protein is Transcription termination factor Rho of Micrococcus luteus (Micrococcus lysodeikticus).